Here is a 539-residue protein sequence, read N- to C-terminus: DnaJ homolog subfamily C member 7 homolog (539 aa).

6 TPR repeats span residues 3-36 (HEEC…SNGT), 75-108 (IKGY…DPRN), 189-222 (PEYL…DPDY), 235-268 (IESK…DPKL), 273-306 (SQLY…DPNY), and 307-340 (GKAY…DPEN). Positions 361–431 (DYYKILGVSK…KKKRQYDMGQ (71 aa)) constitute a J domain. A disordered region spans residues 512-539 (MGGGFGGHSGHSHGGSRSRSSRGGNEYR). The segment covering 521–531 (GHSHGGSRSRS) has biased composition (basic residues).

This Dictyostelium discoideum (Social amoeba) protein is DnaJ homolog subfamily C member 7 homolog (dnajc7).